We begin with the raw amino-acid sequence, 360 residues long: tRNA pseudouridine synthase D (360 aa).

Aspartate 76 acts as the Nucleophile in catalysis. Positions 151–332 (GMPNFFGYQR…HGIYKEKNAW (182 aa)) constitute a TRUD domain.

This sequence belongs to the pseudouridine synthase TruD family.

It carries out the reaction uridine(13) in tRNA = pseudouridine(13) in tRNA. Responsible for synthesis of pseudouridine from uracil-13 in transfer RNAs. The polypeptide is tRNA pseudouridine synthase D (Nitratiruptor sp. (strain SB155-2)).